Consider the following 487-residue polypeptide: N-succinylglutamate 5-semialdehyde dehydrogenase (487 aa).

Residue 221-226 participates in NAD(+) binding; it reads GSSDTG. Catalysis depends on residues glutamate 244 and cysteine 278.

The protein belongs to the aldehyde dehydrogenase family. AstD subfamily.

The enzyme catalyses N-succinyl-L-glutamate 5-semialdehyde + NAD(+) + H2O = N-succinyl-L-glutamate + NADH + 2 H(+). The protein operates within amino-acid degradation; L-arginine degradation via AST pathway; L-glutamate and succinate from L-arginine: step 4/5. Functionally, catalyzes the NAD-dependent reduction of succinylglutamate semialdehyde into succinylglutamate. The sequence is that of N-succinylglutamate 5-semialdehyde dehydrogenase from Burkholderia lata (strain ATCC 17760 / DSM 23089 / LMG 22485 / NCIMB 9086 / R18194 / 383).